The sequence spans 152 residues: NADH-quinone oxidoreductase subunit A 2 (152 aa).

A run of 3 helical transmembrane segments spans residues 8 to 28, 63 to 83, and 90 to 110; these read FGKV…GYVS, FYVV…LFPW, and LGGF…LGLV.

The protein belongs to the complex I subunit 3 family. NDH-1 is composed of 14 different subunits. Subunits NuoA, H, J, K, L, M, N constitute the membrane sector of the complex.

Its subcellular location is the cell inner membrane. The catalysed reaction is a quinone + NADH + 5 H(+)(in) = a quinol + NAD(+) + 4 H(+)(out). In terms of biological role, NDH-1 shuttles electrons from NADH, via FMN and iron-sulfur (Fe-S) centers, to quinones in the respiratory chain. The immediate electron acceptor for the enzyme in this species is believed to be a menaquinone. Couples the redox reaction to proton translocation (for every two electrons transferred, four hydrogen ions are translocated across the cytoplasmic membrane), and thus conserves the redox energy in a proton gradient. The sequence is that of NADH-quinone oxidoreductase subunit A 2 from Chloroherpeton thalassium (strain ATCC 35110 / GB-78).